A 118-amino-acid chain; its full sequence is Small ribosomal subunit protein uS13 (118 aa).

Residues 94 to 118 form a disordered region; that stretch reads GLPLRGQRTRTNARTRKGPRRPIRK.

The protein belongs to the universal ribosomal protein uS13 family. Part of the 30S ribosomal subunit. Forms a loose heterodimer with protein S19. Forms two bridges to the 50S subunit in the 70S ribosome.

Functionally, located at the top of the head of the 30S subunit, it contacts several helices of the 16S rRNA. In the 70S ribosome it contacts the 23S rRNA (bridge B1a) and protein L5 of the 50S subunit (bridge B1b), connecting the 2 subunits; these bridges are implicated in subunit movement. Contacts the tRNAs in the A and P-sites. The polypeptide is Small ribosomal subunit protein uS13 (Thioalkalivibrio sulfidiphilus (strain HL-EbGR7)).